Reading from the N-terminus, the 112-residue chain is Virion protein 6 (112 aa).

The protein localises to the virion. This Enterococcus phage phiEF24C (Enterococcus bacteriophage phi-EF24C) protein is Virion protein 6.